Reading from the N-terminus, the 92-residue chain is Small ribosomal subunit protein uS19c (92 aa).

The protein belongs to the universal ribosomal protein uS19 family.

It is found in the plastid. Its subcellular location is the chloroplast. Protein S19 forms a complex with S13 that binds strongly to the 16S ribosomal RNA. The protein is Small ribosomal subunit protein uS19c of Angiopteris evecta (Mule's foot fern).